Reading from the N-terminus, the 370-residue chain is MTNSTQTRAKPARISFLDKYIPLWIILAMAFGLFLGRSVSGLSGFLGAMEVGGISLPIALGLLVMMYPPLAKVRYDKTKQIATDKHLMGVSLILNWVVGPALMFALAWLFLPDQPELRTGLIIVGLARCIAMVLVWSDMSCGDREATAVLVAINSVFQVAMFGALGWFYLQVLPSWLGLPTTTAQFSFWSIVTSVLVFLGIPLLAGVFSRIIGEKIKGREWYEQKFLPAISPFALIGLLYTIVLLFSLQGDQIVSQPWAVVRLAIPLVIYFVGMFFISLIASKLSGMNYAKSASVSFTAAGNNFELAIAVSIGTFGATSAQAMAGTIGPLIEIPVLVGLVYAMLWLGPKLFPNDPTLPSSARSTSQIINS.

The Cytoplasmic segment spans residues 1-15 (MTNSTQTRAKPARIS). The helical transmembrane segment at 16 to 36 (FLDKYIPLWIILAMAFGLFLG) threads the bilayer. Residues 37–44 (RSVSGLSG) lie on the Extracellular side of the membrane. Residues 45 to 65 (FLGAMEVGGISLPIALGLLVM) traverse the membrane as a helical segment. At 66–91 (MYPPLAKVRYDKTKQIATDKHLMGVS) the chain is on the cytoplasmic side. A helical membrane pass occupies residues 92 to 112 (LILNWVVGPALMFALAWLFLP). At 113–118 (DQPELR) the chain is on the extracellular side. The helical transmembrane segment at 119–139 (TGLIIVGLARCIAMVLVWSDM) threads the bilayer. Residues 140–147 (SCGDREAT) lie on the Cytoplasmic side of the membrane. Residues 148–168 (AVLVAINSVFQVAMFGALGWF) form a helical membrane-spanning segment. Over 169–187 (YLQVLPSWLGLPTTTAQFS) the chain is Extracellular. Residues 188-208 (FWSIVTSVLVFLGIPLLAGVF) form a helical membrane-spanning segment. Residues 209–225 (SRIIGEKIKGREWYEQK) are Cytoplasmic-facing. A helical transmembrane segment spans residues 226–246 (FLPAISPFALIGLLYTIVLLF). Residues 247–259 (SLQGDQIVSQPWA) are Extracellular-facing. Residues 260-280 (VVRLAIPLVIYFVGMFFISLI) traverse the membrane as a helical segment. Residues 281–303 (ASKLSGMNYAKSASVSFTAAGNN) are Cytoplasmic-facing. A helical membrane pass occupies residues 304-324 (FELAIAVSIGTFGATSAQAMA). Topologically, residues 325-326 (GT) are extracellular. A helical membrane pass occupies residues 327 to 347 (IGPLIEIPVLVGLVYAMLWLG). Over 348–370 (PKLFPNDPTLPSSARSTSQIINS) the chain is Cytoplasmic.

It belongs to the arsenical resistance-3 (ACR3) (TC 2.A.59) family.

The protein resides in the cell membrane. Its activity is regulated as follows. Inhibited by carbonyl cyanide m-chlorophenylhydrazone (CCCP). Catalyzes the proton motive force-dependent arsenite efflux from the cell. Probably functions as an arsenite/H(+) antiporter. Does not transport antimonite. In Corynebacterium glutamicum (strain ATCC 13032 / DSM 20300 / JCM 1318 / BCRC 11384 / CCUG 27702 / LMG 3730 / NBRC 12168 / NCIMB 10025 / NRRL B-2784 / 534), this protein is Arsenical-resistance protein Acr3 (acr3).